Reading from the N-terminus, the 742-residue chain is RING finger protein 145 homolog (742 aa).

The next 11 helical transmembrane spans lie at Ala-109 to Leu-129, His-138 to Leu-158, His-178 to Val-198, Ala-233 to Ile-253, Ile-285 to Leu-305, Ile-318 to Val-338, Ser-368 to Met-388, Ile-395 to Ile-415, Ile-438 to Leu-458, Ile-463 to Ile-483, and Val-533 to Ile-553. The RING-type; atypical zinc-finger motif lies at Cys-592 to Cys-630. Disordered regions lie at residues Lys-642 to Met-684 and Ala-722 to Asn-742. Residues Ala-659 to Pro-672 are compositionally biased toward acidic residues.

Its subcellular location is the membrane. It localises to the golgi apparatus. It is found in the cis-Golgi network. The protein resides in the trans-Golgi network. The enzyme catalyses S-ubiquitinyl-[E2 ubiquitin-conjugating enzyme]-L-cysteine + [acceptor protein]-L-lysine = [E2 ubiquitin-conjugating enzyme]-L-cysteine + N(6)-ubiquitinyl-[acceptor protein]-L-lysine.. Functionally, E3 ubiquitin ligase that catalyzes the direct transfer of ubiquitin from E2 ubiquitin-conjugating enzyme to a specific substrate. Acting downstream of probable Golgi transport protein eas-1, involved in inhibition of activation of transcription factor sbp-1, thereby playing a role in regulating AMsh glial cell size. This is RING finger protein 145 homolog from Caenorhabditis elegans.